Reading from the N-terminus, the 251-residue chain is Ribosomal RNA small subunit methyltransferase J (251 aa).

S-adenosyl-L-methionine-binding positions include 100 to 101, 116 to 117, and Asp170; these read RD and ER.

The protein belongs to the methyltransferase superfamily. RsmJ family.

Its subcellular location is the cytoplasm. It carries out the reaction guanosine(1516) in 16S rRNA + S-adenosyl-L-methionine = N(2)-methylguanosine(1516) in 16S rRNA + S-adenosyl-L-homocysteine + H(+). Specifically methylates the guanosine in position 1516 of 16S rRNA. The protein is Ribosomal RNA small subunit methyltransferase J of Haemophilus ducreyi (strain 35000HP / ATCC 700724).